The chain runs to 485 residues: Glutamyl-tRNA(Gln) amidotransferase subunit A (485 aa).

Active-site charge relay system residues include lysine 78 and serine 153. The Acyl-ester intermediate role is filled by serine 177.

Belongs to the amidase family. GatA subfamily. In terms of assembly, heterotrimer of A, B and C subunits.

It carries out the reaction L-glutamyl-tRNA(Gln) + L-glutamine + ATP + H2O = L-glutaminyl-tRNA(Gln) + L-glutamate + ADP + phosphate + H(+). Allows the formation of correctly charged Gln-tRNA(Gln) through the transamidation of misacylated Glu-tRNA(Gln) in organisms which lack glutaminyl-tRNA synthetase. The reaction takes place in the presence of glutamine and ATP through an activated gamma-phospho-Glu-tRNA(Gln). This is Glutamyl-tRNA(Gln) amidotransferase subunit A from Geobacter sp. (strain M21).